Here is a 256-residue protein sequence, read N- to C-terminus: Proteasome subunit alpha (256 aa).

The disordered stretch occupies residues 226–256 (LLPSQEESGSTDGEASGDAGDDKKTGDDKKS). A compositionally biased stretch (basic and acidic residues) spans 245–256 (GDDKKTGDDKKS).

This sequence belongs to the peptidase T1A family. As to quaternary structure, the 20S proteasome core is composed of 14 alpha and 14 beta subunits that assemble into four stacked heptameric rings, resulting in a barrel-shaped structure. The two inner rings, each composed of seven catalytic beta subunits, are sandwiched by two outer rings, each composed of seven alpha subunits. The catalytic chamber with the active sites is on the inside of the barrel. Has a gated structure, the ends of the cylinder being occluded by the N-termini of the alpha-subunits. Is capped by the proteasome-associated ATPase, ARC.

It localises to the cytoplasm. It participates in protein degradation; proteasomal Pup-dependent pathway. The formation of the proteasomal ATPase ARC-20S proteasome complex, likely via the docking of the C-termini of ARC into the intersubunit pockets in the alpha-rings, may trigger opening of the gate for substrate entry. Interconversion between the open-gate and close-gate conformations leads to a dynamic regulation of the 20S proteasome proteolysis activity. Its function is as follows. Component of the proteasome core, a large protease complex with broad specificity involved in protein degradation. The protein is Proteasome subunit alpha of Saccharopolyspora erythraea (strain ATCC 11635 / DSM 40517 / JCM 4748 / NBRC 13426 / NCIMB 8594 / NRRL 2338).